The primary structure comprises 149 residues: Large ribosomal subunit protein uL15 (149 aa).

Basic residues predominate over residues M1–G29. A disordered region spans residues M1–G38.

Belongs to the universal ribosomal protein uL15 family.

The polypeptide is Large ribosomal subunit protein uL15 (RPL27A) (Tetrahymena thermophila).